Reading from the N-terminus, the 935-residue chain is Isoleucine--tRNA ligase (935 aa).

Residues 58-68 carry the 'HIGH' region motif; that stretch reads PYANGNLHLGH. Glu559 is an L-isoleucyl-5'-AMP binding site. The 'KMSKS' region signature appears at 600–604; it reads KMSKS. Lys603 lines the ATP pocket. Positions 898, 901, 918, and 921 each coordinate Zn(2+).

Belongs to the class-I aminoacyl-tRNA synthetase family. IleS type 1 subfamily. In terms of assembly, monomer. It depends on Zn(2+) as a cofactor.

It localises to the cytoplasm. The enzyme catalyses tRNA(Ile) + L-isoleucine + ATP = L-isoleucyl-tRNA(Ile) + AMP + diphosphate. In terms of biological role, catalyzes the attachment of isoleucine to tRNA(Ile). As IleRS can inadvertently accommodate and process structurally similar amino acids such as valine, to avoid such errors it has two additional distinct tRNA(Ile)-dependent editing activities. One activity is designated as 'pretransfer' editing and involves the hydrolysis of activated Val-AMP. The other activity is designated 'posttransfer' editing and involves deacylation of mischarged Val-tRNA(Ile). The polypeptide is Isoleucine--tRNA ligase (Haemophilus ducreyi (strain 35000HP / ATCC 700724)).